The primary structure comprises 287 residues: Eukaryotic translation initiation factor 3 subunit F (287 aa).

The region spanning 12–142 (VRVHPVVLFQ…IKAYVCVSLG (131 aa)) is the MPN domain.

The protein belongs to the eIF-3 subunit F family. As to quaternary structure, component of the eukaryotic translation initiation factor 3 (eIF-3) complex.

The protein resides in the cytoplasm. Component of the eukaryotic translation initiation factor 3 (eIF-3) complex, which is involved in protein synthesis of a specialized repertoire of mRNAs and, together with other initiation factors, stimulates binding of mRNA and methionyl-tRNAi to the 40S ribosome. The eIF-3 complex specifically targets and initiates translation of a subset of mRNAs involved in cell proliferation. The chain is Eukaryotic translation initiation factor 3 subunit F from Anopheles gambiae (African malaria mosquito).